Reading from the N-terminus, the 491-residue chain is uncharacterized protein (491 aa).

Helical transmembrane passes span 48–68 (LILV…VAPC), 85–105 (ALIL…SAPL), 112–132 (RMLL…CGLA), 140–160 (IFRF…SGTI), 174–194 (AVMS…SGFI), 202–222 (WIFW…LPLL), 277–297 (PIVI…YLVL), 317–337 (LNYI…GIFI), 358–378 (VPVI…YGWT), 383–403 (THWI…MLGW), 408–428 (TYLI…ACCV), and 455–475 (LLAF…WFGG).

The protein belongs to the major facilitator superfamily.

It localises to the membrane. This is an uncharacterized protein from Schizosaccharomyces pombe (strain 972 / ATCC 24843) (Fission yeast).